We begin with the raw amino-acid sequence, 750 residues long: Photosystem I P700 chlorophyll a apoprotein A1 (750 aa).

8 consecutive transmembrane segments (helical) span residues 70 to 93 (VFSAHFGQLSIIFLWLSGMYFHGA), 156 to 179 (LYCTAIGALVFAALMLFAGWFHYH), 195 to 219 (LNHHLAGLLGLGSLSWAGHQVHVSL), 291 to 309 (IAHHHLAIAILFLIAGHMY), 346 to 369 (WHAQLSLNLAMLGSLTIVVAHHMY), 385 to 411 (LSLFTHHMWIGGFLIVGAAAHAAIFMV), 433 to 455 (AIISHLNWVCIFLGFHSFGLYIH), and 531 to 549 (FLVHHIHAFTIHVTVLILL). C573 and C582 together coordinate [4Fe-4S] cluster. A run of 2 helical transmembrane segments spans residues 589–610 (HVFLGLFWMYNAISVVIFHFSW) and 664–686 (LSAYGLFFLGAHFVWAFSLMFLF). H675 is a binding site for chlorophyll a'. Chlorophyll a contacts are provided by M683 and Y691. W692 lines the phylloquinone pocket. The chain crosses the membrane as a helical span at residues 724-744 (AVGVTHYLLGGIATTWAFFLA).

This sequence belongs to the PsaA/PsaB family. The PsaA/B heterodimer binds the P700 chlorophyll special pair and subsequent electron acceptors. PSI consists of a core antenna complex that captures photons, and an electron transfer chain that converts photonic excitation into a charge separation. The eukaryotic PSI reaction center is composed of at least 11 subunits. P700 is a chlorophyll a/chlorophyll a' dimer, A0 is one or more chlorophyll a, A1 is one or both phylloquinones and FX is a shared 4Fe-4S iron-sulfur center. is required as a cofactor.

It is found in the plastid. The protein resides in the chloroplast thylakoid membrane. It carries out the reaction reduced [plastocyanin] + hnu + oxidized [2Fe-2S]-[ferredoxin] = oxidized [plastocyanin] + reduced [2Fe-2S]-[ferredoxin]. PsaA and PsaB bind P700, the primary electron donor of photosystem I (PSI), as well as the electron acceptors A0, A1 and FX. PSI is a plastocyanin-ferredoxin oxidoreductase, converting photonic excitation into a charge separation, which transfers an electron from the donor P700 chlorophyll pair to the spectroscopically characterized acceptors A0, A1, FX, FA and FB in turn. Oxidized P700 is reduced on the lumenal side of the thylakoid membrane by plastocyanin. The polypeptide is Photosystem I P700 chlorophyll a apoprotein A1 (Eucalyptus globulus subsp. globulus (Tasmanian blue gum)).